The primary structure comprises 413 residues: Serine hydroxymethyltransferase (413 aa).

Residues leucine 117 and glycine 121 to leucine 123 each bind (6S)-5,6,7,8-tetrahydrofolate. Lysine 226 is modified (N6-(pyridoxal phosphate)lysine). Residue serine 349 to phenylalanine 351 participates in (6S)-5,6,7,8-tetrahydrofolate binding.

It belongs to the SHMT family. As to quaternary structure, homodimer. Pyridoxal 5'-phosphate is required as a cofactor.

The protein localises to the cytoplasm. The catalysed reaction is (6R)-5,10-methylene-5,6,7,8-tetrahydrofolate + glycine + H2O = (6S)-5,6,7,8-tetrahydrofolate + L-serine. It functions in the pathway one-carbon metabolism; tetrahydrofolate interconversion. Its pathway is amino-acid biosynthesis; glycine biosynthesis; glycine from L-serine: step 1/1. Catalyzes the reversible interconversion of serine and glycine with tetrahydrofolate (THF) serving as the one-carbon carrier. This reaction serves as the major source of one-carbon groups required for the biosynthesis of purines, thymidylate, methionine, and other important biomolecules. Also exhibits THF-independent aldolase activity toward beta-hydroxyamino acids, producing glycine and aldehydes, via a retro-aldol mechanism. The sequence is that of Serine hydroxymethyltransferase from Listeria monocytogenes serovar 1/2a (strain ATCC BAA-679 / EGD-e).